Consider the following 296-residue polypeptide: 4-hydroxy-tetrahydrodipicolinate synthase (296 aa).

Thr-44 lines the pyruvate pocket. The active-site Proton donor/acceptor is Tyr-132. The active-site Schiff-base intermediate with substrate is Lys-162. Ile-204 contributes to the pyruvate binding site.

It belongs to the DapA family. Homotetramer; dimer of dimers.

Its subcellular location is the cytoplasm. It catalyses the reaction L-aspartate 4-semialdehyde + pyruvate = (2S,4S)-4-hydroxy-2,3,4,5-tetrahydrodipicolinate + H2O + H(+). It functions in the pathway amino-acid biosynthesis; L-lysine biosynthesis via DAP pathway; (S)-tetrahydrodipicolinate from L-aspartate: step 3/4. Catalyzes the condensation of (S)-aspartate-beta-semialdehyde [(S)-ASA] and pyruvate to 4-hydroxy-tetrahydrodipicolinate (HTPA). The chain is 4-hydroxy-tetrahydrodipicolinate synthase from Novosphingobium aromaticivorans (strain ATCC 700278 / DSM 12444 / CCUG 56034 / CIP 105152 / NBRC 16084 / F199).